Here is a 331-residue protein sequence, read N- to C-terminus: Probable mannose-1-phosphate guanylyltransferase 3 (331 aa).

A diphosphate-binding site is contributed by K3. The GDP-alpha-D-mannose site is built by G66, N90, D92, G127, and N154.

Belongs to the transferase hexapeptide repeat family.

It catalyses the reaction alpha-D-mannose 1-phosphate + GTP + H(+) = GDP-alpha-D-mannose + diphosphate. It participates in nucleotide-sugar biosynthesis; GDP-alpha-D-mannose biosynthesis; GDP-alpha-D-mannose from alpha-D-mannose 1-phosphate (GTP route): step 1/1. Functionally, catalyzes a reaction of the Smirnoff-Wheeler pathway, the major route to ascorbate biosynthesis in plants. This Arabidopsis thaliana (Mouse-ear cress) protein is Probable mannose-1-phosphate guanylyltransferase 3.